Consider the following 670-residue polypeptide: MNAPERIDSAARCANALRFLAADAVEQAKSGHPGAPMGMAEMAEVLWRRHLRHNPANPAWPDRDRFVLSNGHASMLQYALLHLTGYDLPMSQLRQFRQLHAATPGHPELGVTPGVETTTGPLGQGLANAVGMALAEKLLAATFNRPGFDIVDHHTYVFLGDGCLMEGLSHEACSLAGTLRLGKLICLYDDNGISIDGEVAGWFADDTPKRFAAYGWHVIADVDGHDAHALDAALHEAKAERDRPTLICCRTVIGKGAPAKAGGHDVHGAPLGAPEIAAMRTALGWEAEPFTVPADVADAWDARAQGAAREAEWEARFVSYCAAHPELAEEFVRRANGRLPEGFDAELMALLDAPSPLQGKIATRKASQLCLEALTPALPELLGGSADLTGSNLTNVKASVWVNHAGHGNYVSYGVREFGMAAAMNGIALHGGLIPYGGTFMTFSDYSRNAIRMAALMRLRVVHVLTHDSIGLGEDGPTHQPVEHAASLRLIPNNQVWRPCDGAETAYAWLAALRREDGPSCLVLSRQALMPFERNPAQRAEIARGGYVLRDVPAPRVVLIATGSEVEIAMRAALDLADAGIAARVVSMPCVELFYAQDVAYRDTVLPPGLPRVSVEAGGTWFWRGVVGEQGLALGIDTFGESAPAEALYQHFGLTPAHVAAAARVLLEEA.

A substrate-binding site is contributed by His32. Thiamine diphosphate-binding positions include His72 and 120–122 (GPL). Asp161 provides a ligand contact to Mg(2+). 2 residues coordinate thiamine diphosphate: Gly162 and Asn191. 2 residues coordinate Mg(2+): Asn191 and Ile193. His267, Arg364, and Ser391 together coordinate substrate. His267 is a thiamine diphosphate binding site. Catalysis depends on Glu417, which acts as the Proton donor. Thiamine diphosphate is bound at residue Phe443. 3 residues coordinate substrate: His467, Asp475, and Arg526.

This sequence belongs to the transketolase family. In terms of assembly, homodimer. The cofactor is Mg(2+). It depends on Ca(2+) as a cofactor. Mn(2+) is required as a cofactor. Requires Co(2+) as cofactor. Thiamine diphosphate serves as cofactor.

The catalysed reaction is D-sedoheptulose 7-phosphate + D-glyceraldehyde 3-phosphate = aldehydo-D-ribose 5-phosphate + D-xylulose 5-phosphate. It functions in the pathway carbohydrate biosynthesis; Calvin cycle. Catalyzes the transfer of a two-carbon ketol group from a ketose donor to an aldose acceptor, via a covalent intermediate with the cofactor thiamine pyrophosphate. The sequence is that of Transketolase, chromosomal (cbbTC) from Cupriavidus necator (strain ATCC 17699 / DSM 428 / KCTC 22496 / NCIMB 10442 / H16 / Stanier 337) (Ralstonia eutropha).